The sequence spans 315 residues: Calumenin (315 aa).

The signal sequence occupies residues Met1–Ser19. The residue at position 44 (Ser44) is a Phosphoserine. Tyr47 is subject to Phosphotyrosine. The residue at position 65 (Thr65) is a Phosphothreonine. EF-hand domains follow at residues Glu68 to Arg103, Trp104 to Asp139, Gln151 to Asp186, Met188 to Asn223, Trp229 to Asp264, and His265 to Ser300. Residue Ser69 is modified to Phosphoserine. Ca(2+) is bound by residues Asp81, Asp83, Asp85, Glu92, Asp117, Asn119, Asp121, and Glu128. Asn131 is a glycosylation site (N-linked (GlcNAc...) asparagine). Asp164 is a Ca(2+) binding site. Residue Lys165 is modified to N6-acetyllysine. Asp166, Asp168, Glu175, Asp201, Asn203, Asp205, Glu212, Asp242, Asn244, Asp246, Lys248, and Glu253 together coordinate Ca(2+). Phosphothreonine is present on Thr254. Phosphoserine occurs at positions 261 and 277. Ca(2+) contacts are provided by Asp278, Asn280, Asp282, Lys284, and Glu289. Residues His312–Phe315 carry the Prevents secretion from ER motif.

This sequence belongs to the CREC family. In terms of assembly, interacts with GGCX.

The protein resides in the endoplasmic reticulum membrane. The protein localises to the golgi apparatus. It localises to the secreted. It is found in the melanosome. Its subcellular location is the sarcoplasmic reticulum lumen. Functionally, involved in regulation of vitamin K-dependent carboxylation of multiple N-terminal glutamate residues. Seems to inhibit gamma-carboxylase GGCX. Binds 7 calcium ions with a low affinity. The chain is Calumenin (CALU) from Pongo abelii (Sumatran orangutan).